The following is a 347-amino-acid chain: MSTSLPLADRLNRPIGVLRLSLTARCNLACPYCCPDVEEPPGLLTLEQQIRVIRVATRLGVQTLRLTGGEPLLSRRLLPLLEAVAQARRDRSDPMAGLQAVALTSNGVLLSEPMGRALRAAGLDRITISLDAAEGEAAARMAGLQGGAVAGERLVRQVQDGIAAAFAAGFDPSRGELKLNAVIQRGINDDQLLPLAALARQRGMELRLIEYMDVGNRNQWTLDQVLPAAQMVERINARWPLEPLGRPRGGTARRWRYGDGAGSIGVISSISEPFCGDCNRLRVTADGQAFTCLFSAEGTDLKPALASDLQLEQAMRQLWQRRQDRYSEERDPAAAASTHAEMAYLGG.

In terms of domain architecture, Radical SAM core spans 10–242 (RLNRPIGVLR…ERINARWPLE (233 aa)). GTP is bound at residue arginine 19. [4Fe-4S] cluster is bound by residues cysteine 26 and cysteine 30. Tyrosine 32 lines the S-adenosyl-L-methionine pocket. Cysteine 33 is a [4Fe-4S] cluster binding site. Arginine 65 serves as a coordination point for GTP. Residue glycine 69 participates in S-adenosyl-L-methionine binding. A GTP-binding site is contributed by threonine 104. Serine 129 lines the S-adenosyl-L-methionine pocket. Lysine 178 is a binding site for GTP. Residue methionine 212 participates in S-adenosyl-L-methionine binding. Cysteine 275 and cysteine 278 together coordinate [4Fe-4S] cluster. 280 to 282 (RLR) contacts GTP. Residue cysteine 292 coordinates [4Fe-4S] cluster.

This sequence belongs to the radical SAM superfamily. MoaA family. In terms of assembly, monomer and homodimer. It depends on [4Fe-4S] cluster as a cofactor.

The catalysed reaction is GTP + AH2 + S-adenosyl-L-methionine = (8S)-3',8-cyclo-7,8-dihydroguanosine 5'-triphosphate + 5'-deoxyadenosine + L-methionine + A + H(+). The protein operates within cofactor biosynthesis; molybdopterin biosynthesis. Functionally, catalyzes the cyclization of GTP to (8S)-3',8-cyclo-7,8-dihydroguanosine 5'-triphosphate. In Synechococcus sp. (strain CC9605), this protein is GTP 3',8-cyclase.